A 124-amino-acid polypeptide reads, in one-letter code: Small ribosomal subunit protein uS12 (124 aa).

3-methylthioaspartic acid is present on D89.

Belongs to the universal ribosomal protein uS12 family. In terms of assembly, part of the 30S ribosomal subunit. Contacts proteins S8 and S17. May interact with IF1 in the 30S initiation complex.

Functionally, with S4 and S5 plays an important role in translational accuracy. Its function is as follows. Interacts with and stabilizes bases of the 16S rRNA that are involved in tRNA selection in the A site and with the mRNA backbone. Located at the interface of the 30S and 50S subunits, it traverses the body of the 30S subunit contacting proteins on the other side and probably holding the rRNA structure together. The combined cluster of proteins S8, S12 and S17 appears to hold together the shoulder and platform of the 30S subunit. This Arthrobacter sp. (strain FB24) protein is Small ribosomal subunit protein uS12.